A 227-amino-acid polypeptide reads, in one-letter code: Cytidylate kinase (227 aa).

An ATP-binding site is contributed by 12–20; sequence GPSGAGKGT.

The protein belongs to the cytidylate kinase family. Type 1 subfamily.

It localises to the cytoplasm. It carries out the reaction CMP + ATP = CDP + ADP. It catalyses the reaction dCMP + ATP = dCDP + ADP. The protein is Cytidylate kinase of Shigella flexneri.